The following is a 284-amino-acid chain: Ribosomal RNA small subunit methyltransferase A (284 aa).

The S-adenosyl-L-methionine site is built by N26, L28, G53, E74, D97, and N127.

The protein belongs to the class I-like SAM-binding methyltransferase superfamily. rRNA adenine N(6)-methyltransferase family. RsmA subfamily.

It is found in the cytoplasm. The enzyme catalyses adenosine(1518)/adenosine(1519) in 16S rRNA + 4 S-adenosyl-L-methionine = N(6)-dimethyladenosine(1518)/N(6)-dimethyladenosine(1519) in 16S rRNA + 4 S-adenosyl-L-homocysteine + 4 H(+). Functionally, specifically dimethylates two adjacent adenosines (A1518 and A1519) in the loop of a conserved hairpin near the 3'-end of 16S rRNA in the 30S particle. May play a critical role in biogenesis of 30S subunits. The sequence is that of Ribosomal RNA small subunit methyltransferase A from Anaeromyxobacter dehalogenans (strain 2CP-C).